The primary structure comprises 81 residues: Defensin-like protein 311 (81 aa).

The N-terminal stretch at 1–24 (MEKISAFFVILFLVSSCLVTMSVG) is a signal peptide. 3 disulfides stabilise this stretch: Cys-27-Cys-50, Cys-33-Cys-57, and Cys-41-Cys-59.

The protein belongs to the DEFL family.

It is found in the secreted. The sequence is that of Defensin-like protein 311 from Arabidopsis thaliana (Mouse-ear cress).